The following is a 503-amino-acid chain: Na(+)-translocating NADH-quinone reductase subunit B (503 aa).

Transmembrane regions (helical) follow at residues Met-55–Leu-75, Ile-120–Ile-142, and Leu-160–Val-180. Thr-248 bears the FMN phosphoryl threonine mark. The next 5 membrane-spanning stretches (helical) occupy residues Thr-361–Trp-381, Met-384–Leu-404, Phe-417–Met-437, Trp-452–Tyr-472, and Gly-475–Leu-495.

The protein belongs to the NqrB/RnfD family. Composed of six subunits; NqrA, NqrB, NqrC, NqrD, NqrE and NqrF. FMN serves as cofactor.

The protein localises to the cell inner membrane. The catalysed reaction is a ubiquinone + n Na(+)(in) + NADH + H(+) = a ubiquinol + n Na(+)(out) + NAD(+). Functionally, NQR complex catalyzes the reduction of ubiquinone-1 to ubiquinol by two successive reactions, coupled with the transport of Na(+) ions from the cytoplasm to the periplasm. NqrA to NqrE are probably involved in the second step, the conversion of ubisemiquinone to ubiquinol. The chain is Na(+)-translocating NADH-quinone reductase subunit B from Chlamydia trachomatis serovar A (strain ATCC VR-571B / DSM 19440 / HAR-13).